The following is a 757-amino-acid chain: RNA-directed RNA polymerase catalytic subunit (757 aa).

The segment at 50-82 is disordered; that stretch reads SEKGKWTTNTETGAPQLNPIDGPLPEDNEPSGY. Positions 55–64 are enriched in polar residues; sequence WTTNTETGAP. Short sequence motifs (nuclear localization signal) lie at residues 187–195 and 203–216; these read RKRRVRDNM and RTIGKKKQRVNKRS. Residues 249–256 are promoter-binding site; that stretch reads RGFVYFVE. Residues 286 to 483 form the RdRp catalytic domain; sequence VRKMMTNSQD…GINMSKKKSY (198 aa).

The protein belongs to the influenza viruses polymerase PB1 family. In terms of assembly, influenza RNA polymerase is composed of three subunits: PB1, PB2 and PA. Interacts (via N-terminus) with PA (via C-terminus). Interacts (via C-terminus) with PB2 (via N-terminus); this interaction is essential for transcription initiation. Post-translationally, phosphorylated by host PRKCA.

It is found in the host nucleus. The protein resides in the host cytoplasm. The enzyme catalyses RNA(n) + a ribonucleoside 5'-triphosphate = RNA(n+1) + diphosphate. RNA-dependent RNA polymerase which is responsible for replication and transcription of virus RNA segments. The transcription of viral mRNAs occurs by a unique mechanism called cap-snatching. 5' methylated caps of cellular mRNAs are cleaved after 10-13 nucleotides by PA. In turn, these short capped RNAs are used as primers by PB1 for transcription of viral mRNAs. During virus replication, PB1 initiates RNA synthesis and copy vRNA into complementary RNA (cRNA) which in turn serves as a template for the production of more vRNAs. The chain is RNA-directed RNA polymerase catalytic subunit from Aves (whales).